The primary structure comprises 253 residues: MKHINLSFAACGFLGIYHLGAASALCRHGKKLVKDVKAFAGASAGSLVASVLLTAPEKIEECNQFTYKFAEEIRRQSFGAVTPGYDFMARLRSGMESILPPSAHELAQNRLHVSITNAKTRENHLVSTFSSREDLIKVLLASSFVPIYAGLKLVEYKGQKWVDGGLTNALPILPVGRTVTISPFSGRLDISPQDKGQLDLYVNIAKQDIMLSLANLVRLNQALFPPSKRKMESLYQCGFDDTVKFLLKENWFE.

The PNPLA domain occupies 6–176 (LSFAACGFLG…TNALPILPVG (171 aa)). The GXSXG motif lies at 41–45 (GASAG). The active-site Nucleophile is the Ser43. The Proton acceptor role is filled by Asp163. The DGA/G signature appears at 163–165 (DGG).

In terms of tissue distribution, expressed in all tissues examined, including heart, brain, placenta, lung, liver, muscle, kidney, pancreas and spleen.

It is found in the mitochondrion. It carries out the reaction a triacylglycerol + H2O = a diacylglycerol + a fatty acid + H(+). The catalysed reaction is a 1,2-diacyl-sn-glycero-3-phosphocholine + H2O = a 1-acyl-sn-glycero-3-phosphocholine + a fatty acid + H(+). It catalyses the reaction an all-trans-retinyl ester + H2O = all-trans-retinol + a fatty acid + H(+). The enzyme catalyses 2 a 1-acylglycerol = a 1,2-diacylglycerol + glycerol. It carries out the reaction a 1-acylglycerol + a 1,2-diacylglycerol = a triacylglycerol + glycerol. The catalysed reaction is a 1-acylglycerol + a 1,3-diacylglycerol = a triacylglycerol + glycerol. It catalyses the reaction a triacylglycerol + H2O = a 1,2-diacylglycerol + a fatty acid + H(+). The enzyme catalyses a triacylglycerol + H2O = a 1,3-diacylglycerol + a fatty acid + H(+). It carries out the reaction a triacylglycerol + all-trans-retinol = an all-trans-retinyl ester + a diacylglycerol. The catalysed reaction is 2 1-(9Z-octadecenoyl)-glycerol = 1,2-di-(9Z-octadecenoyl)-glycerol + glycerol. It catalyses the reaction 1-(9Z-octadecenoyl)-glycerol + 1,2-di-(9Z-octadecenoyl)-glycerol = 1,2,3-tri-(9Z-octadecenoyl)-glycerol + glycerol. The enzyme catalyses 1-(9Z-octadecenoyl)-glycerol + 1,3-di-(9Z-octadecenoyl)-glycerol = 1,2,3-tri-(9Z-octadecenoyl)-glycerol + glycerol. It carries out the reaction 1,2-di-(9Z-octadecenoyl)-glycerol + (9Z)-octadecenoate + H(+) = 1,2,3-tri-(9Z-octadecenoyl)-glycerol + H2O. The catalysed reaction is 1,2,3-tri-(9Z-octadecenoyl)-glycerol + H2O = 1,3-di-(9Z-octadecenoyl)-glycerol + (9Z)-octadecenoate + H(+). It catalyses the reaction all-trans-retinyl hexadecanoate + H2O = all-trans-retinol + hexadecanoate + H(+). The enzyme catalyses 1,2,3-tri-(9Z-octadecenoyl)-glycerol + all-trans-retinol = all-trans-retinyl 9Z-octadecenoate + di-(9Z)-octadecenoylglycerol. The triglyceride lipase activity is inhibited by BEL ((E)-6-(bromomethylene)-3-(1-naphthalenyl)-2H-tetrahydropyran-2-one), a suicide substrate inhibitor. In terms of biological role, has abundant triacylglycerol lipase activity. Transfers fatty acid from triglyceride to retinol, hydrolyzes retinylesters, and generates 1,3-diacylglycerol from triglycerides. Additionally possesses acylglycerol transacylase and phospholipase A2 activities. This chain is Patatin-like phospholipase domain-containing protein 4, found in Homo sapiens (Human).